Consider the following 526-residue polypeptide: Germ cell-less protein-like 2 (526 aa).

Positions 1–85 (MGSSSSRVLG…DKQQPLLNTP (85 aa)) are disordered. Residues 49–55 (SHKRKRS) carry the Nuclear localization signal motif. A compositionally biased stretch (basic and acidic residues) spans 62 to 77 (CDPDSHREEHEEEGDK). The Nuclear localization signal signature appears at 85 to 91 (PARKKLR). Residues 108-178 (SDIKICALGE…LYRDDVLIKP (71 aa)) enclose the BTB domain.

As to quaternary structure, interacts with CUL3. In terms of tissue distribution, expressed predominantly in testis.

It localises to the nucleus matrix. The protein operates within protein modification; protein ubiquitination. Functionally, possible function in spermatogenesis. Probable substrate-specific adapter of an E3 ubiquitin-protein ligase complex which mediates the ubiquitination and subsequent proteasomal degradation of target proteins. The polypeptide is Germ cell-less protein-like 2 (Homo sapiens (Human)).